We begin with the raw amino-acid sequence, 149 residues long: UPF0260 protein PSEEN4031 (149 aa).

It belongs to the UPF0260 family.

This Pseudomonas entomophila (strain L48) protein is UPF0260 protein PSEEN4031.